A 184-amino-acid polypeptide reads, in one-letter code: RFKKIRRLGALPGLTSKRPRSGNDLKNQLRSVKRSQYRIRLEEKQKLRFHYGLTERQLLKYVHIAGKVKGSTGQVLLQLLEMRLDNILFRLGMASTIPGARQLVNHRHILVNGRIVDIPSYRCKPQDIITTKDKQRSKALIQNYIASSTQPQEELPNHLTIDAFQYKGLVNQIIDSKWIGLKIN.

In terms of domain architecture, S4 RNA-binding spans 82-143 (MRLDNILFRL…KQRSKALIQN (62 aa)).

Belongs to the universal ribosomal protein uS4 family. In terms of assembly, part of the 30S ribosomal subunit. Contacts protein S5. The interaction surface between S4 and S5 is involved in control of translational fidelity.

The protein resides in the plastid. The protein localises to the chloroplast. One of the primary rRNA binding proteins, it binds directly to 16S rRNA where it nucleates assembly of the body of the 30S subunit. In terms of biological role, with S5 and S12 plays an important role in translational accuracy. In Patersonia fragilis (Short purple-flag), this protein is Small ribosomal subunit protein uS4c (rps4).